The sequence spans 124 residues: Large ribosomal subunit protein bL12 (124 aa).

Belongs to the bacterial ribosomal protein bL12 family. In terms of assembly, homodimer. Part of the ribosomal stalk of the 50S ribosomal subunit. Forms a multimeric L10(L12)X complex, where L10 forms an elongated spine to which 2 to 4 L12 dimers bind in a sequential fashion. Binds GTP-bound translation factors.

In terms of biological role, forms part of the ribosomal stalk which helps the ribosome interact with GTP-bound translation factors. Is thus essential for accurate translation. This is Large ribosomal subunit protein bL12 from Cupriavidus necator (strain ATCC 17699 / DSM 428 / KCTC 22496 / NCIMB 10442 / H16 / Stanier 337) (Ralstonia eutropha).